Here is a 96-residue protein sequence, read N- to C-terminus: Putative pterin-4-alpha-carbinolamine dehydratase (96 aa).

The protein belongs to the pterin-4-alpha-carbinolamine dehydratase family.

The catalysed reaction is (4aS,6R)-4a-hydroxy-L-erythro-5,6,7,8-tetrahydrobiopterin = (6R)-L-erythro-6,7-dihydrobiopterin + H2O. The chain is Putative pterin-4-alpha-carbinolamine dehydratase from Prochlorococcus marinus (strain MIT 9215).